The chain runs to 266 residues: Short-chain dehydrogenase/reductase atnB (266 aa).

NADP(+) contacts are provided by I13, D57, and N85. Catalysis depends on proton donor residues S147 and Y166. Residues Y166, K170, V199, and T201 each coordinate NADP(+). K170 serves as the catalytic Lowers pKa of active site Tyr.

Belongs to the short-chain dehydrogenases/reductases (SDR) family.

Its pathway is secondary metabolite biosynthesis; terpenoid biosynthesis. Short-chain dehydrogenase/reductase; part of the gene cluster that mediates the biosynthesis of the meroterpenoids arthripenoids. The pathway begins with the HR-PKS atnH that catalyzes two chain-extension steps to form a reduced triketide, which then primes the SAT domain in the NR-PKS atnG to initiate three more cycles of extension to give a linear hexaketide corresponding to the polyketide part of arthripenoids. The FAD-dependent monooxygenase atnJ then performs an oxidative decarboxylation at C11 of the atnH/atnG product, via an electrophilic aromatic hydroxylation with concomitant ipso-decarboxylation. The membrane-bound polyprenyl transferase atnF then introduces a farnesyl group before the FAD-dependent monooxygenase atnK functions as the first epoxidase on terminal C12'-C13' olefin, followed by a second epoxidation on C7'-C8' catalyzed by atnA. The terpene cyclase/mutase atnI then initiates the sequential tricyclic ring formation through protonation of the terminal epoxide and catalyzes the regioselective and stereoselective 6/6/6-tricyclic ring formation. The cytochrome P450 monooxygenase atnM is responsible for hydroxylating both C1' and C10'. The next steps may involve ketoreduction and acetyl transfer by the ketoreductase atnB and the acetyltransferase atnC, and lead to the production of arthripenoid B, the final biosynthetic product of the atn cluster. The hydroquinone moiety in arthripenoid B is prone to undergo spontaneous oxidation to afford a benzoquinone compound, a key intermediate for generating structure diversity. For instance, addition of a cysteine followed by ring contraction gives arthripenoid A, tautomerization gives the main product arthripenoid C, addition of a molecular of water or amine affords arthripenoid D or E, respectively, and loss of one water forms arthripenoid F. The sequence is that of Short-chain dehydrogenase/reductase atnB from Arthrinium sp.